Consider the following 31-residue polypeptide: Cyclotide vinc-B (31 aa).

Positions G1–N31 form a cross-link, cyclopeptide (Gly-Asn). Cystine bridges form between C6-C20, C10-C22, and C15-C28.

The protein belongs to the cyclotide family. In terms of processing, this is a cyclic peptide.

Functionally, probably participates in a plant defense mechanism. The polypeptide is Cyclotide vinc-B (Viola inconspicua).